We begin with the raw amino-acid sequence, 82 residues long: Small ribosomal subunit protein bS16 (82 aa).

It belongs to the bacterial ribosomal protein bS16 family.

The protein is Small ribosomal subunit protein bS16 of Edwardsiella ictaluri (strain 93-146).